We begin with the raw amino-acid sequence, 218 residues long: 23 kDa integral membrane protein (218 aa).

Over 1 to 12 the chain is Cytoplasmic; it reads MATLGTGMRCLK. A helical transmembrane segment spans residues 13–36; it reads SCVFILNIICLLCSLVLIGAGAYV. At 37–55 the chain is on the extracellular side; sequence EVKFSQYEANLHKVWQAAP. Residues 56-71 traverse the membrane as a helical segment; that stretch reads IAIIVVGVVILIVSFL. Residues 72–82 are Cytoplasmic-facing; sequence GCCGAIKENVC. A helical membrane pass occupies residues 83-108; the sequence is MLYMYAFFLIVLLIAELVAAIVAVVY. Topologically, residues 109 to 183 are extracellular; sequence KDKIDDEINT…SVFSAFLKRN (75 aa). The chain crosses the membrane as a helical span at residues 184–205; that stretch reads LIIVACVAFGVCFFQLLSIVIA. At 206 to 218 the chain is on the cytoplasmic side; it reads CCLGQRIHDYQNV.

It belongs to the tetraspanin (TM4SF) family.

It localises to the membrane. The protein is 23 kDa integral membrane protein of Schistosoma japonicum (Blood fluke).